The following is a 198-amino-acid chain: Na(+)-translocating NADH-quinone reductase subunit E (198 aa).

6 helical membrane passes run 11-31, 39-59, 77-97, 110-130, 140-160, and 176-196; these read SIFIENMALSFFLGMCTFLAV, FGLGVAVVVVLTIAVPVNNLV, FLNFITFIGVIAALVQILEMV, GIFLPLITVNCAIFGGVSFMV, IVYGFGSGVGWMLAIVALAGI, and LGITFITVGLMALGFMSFSGV.

This sequence belongs to the NqrDE/RnfAE family. As to quaternary structure, composed of six subunits; NqrA, NqrB, NqrC, NqrD, NqrE and NqrF.

It localises to the cell inner membrane. It catalyses the reaction a ubiquinone + n Na(+)(in) + NADH + H(+) = a ubiquinol + n Na(+)(out) + NAD(+). Functionally, NQR complex catalyzes the reduction of ubiquinone-1 to ubiquinol by two successive reactions, coupled with the transport of Na(+) ions from the cytoplasm to the periplasm. NqrA to NqrE are probably involved in the second step, the conversion of ubisemiquinone to ubiquinol. The protein is Na(+)-translocating NADH-quinone reductase subunit E of Vibrio campbellii (strain ATCC BAA-1116).